We begin with the raw amino-acid sequence, 325 residues long: MLRLIALLVCVVYVYGDDVPYSSNQGKCGGHDYEKDGLCCASCHPGFYASRLCGPGSNTVCSPCEDGTFTASTNHAPACVSCRGPCTGHLSESQPCDRTHDRVCNCSTGNYCLLKGQNGCRICAPQTKCPAGYGVSGHTRAGDTLCEKCPPHTYSDSLSPTERCGTSFNYISVGFNLYPVNETSCTTTAGHNEVIKTKEFTVTLNYTDCDPVFHTEYYATSGKEGAGGFFTGTDIYQNTTKVCTLNVEIQCSEGDDIHTLQKTNGGSTMPHSETITVVGSCLSDVNVDIMYSDTNHPGEVDDFVEYHWGTRLRFFPLPKRCTPVS.

An N-terminal signal peptide occupies residues 1–16 (MLRLIALLVCVVYVYG). TNFR-Cys repeat units lie at residues 27 to 62 (KCGG…TVCS), 63 to 104 (PCED…DRVC), 105 to 147 (NCST…TLCE), and 148 to 186 (KCPP…TSCT). 6 disulfide bridges follow: cysteine 28/cysteine 39, cysteine 40/cysteine 53, cysteine 43/cysteine 61, cysteine 64/cysteine 79, cysteine 82/cysteine 96, and cysteine 86/cysteine 104. An N-linked (GlcNAc...) asparagine; by host glycan is attached at asparagine 105. Disulfide bonds link cysteine 106-cysteine 120, cysteine 123-cysteine 146, cysteine 129-cysteine 149, and cysteine 164-cysteine 185. Asparagine 181, asparagine 205, and asparagine 238 each carry an N-linked (GlcNAc...) asparagine; by host glycan.

Its function is as follows. Binds to TNF-alpha and beta. Probably prevents TNF to reach cellular target and thereby deampening the potential antiviral effects of the cytokine. The protein is Tumor necrosis factor soluble receptor of Oryctolagus cuniculus (Rabbit).